The primary structure comprises 871 residues: Transient receptor potential cation channel subfamily V member 4 (871 aa).

The interval 1–68 (MADSSEGPRA…GPGDGRPNLR (68 aa)) is disordered. Over 1–469 (MADSSEGPRA…RDKWRKFGAV (469 aa)) the chain is Cytoplasmic. The residue at position 110 (Tyr-110) is a Phosphotyrosine. ATP-binding positions include Lys-192, Lys-197, Asn-201, 236 to 239 (YRGQ), and Arg-248. 2 ANK repeats span residues 237–266 (RGQT…DVHA) and 284–313 (FGEL…KKAD). 249-251 (RCK) contributes to the a 1,2-diacyl-sn-glycero-3-phospho-(1D-myo-inositol-4,5-bisphosphate) binding site. Tyr-253 bears the Phosphotyrosine mark. A 1,2-diacyl-sn-glycero-3-phospho-(1D-myo-inositol-4,5-bisphosphate) contacts are provided by residues 296–299 (NQPH) and Lys-344. An ANK 3 repeat occupies 369–398 (DGLSPLMMAAKTGKIGIFQHIIRREVTDED). A helical membrane pass occupies residues 470–490 (SFYINVVSYLCAMVIFTLTAY). The Extracellular segment spans residues 491–507 (YQPLEGTPPYPYRTTVD). Residues 508–534 (YLRLAGEVITLFTGVLFFFTNIKDLFM) form a helical membrane-spanning segment. Topologically, residues 535–547 (KKCPGVNSLFIDG) are cytoplasmic. The chain crosses the membrane as a helical span at residues 548–568 (SFQLLYFIYSVLVIVSAALYL). At 569–572 (AGIE) the chain is on the extracellular side. The chain crosses the membrane as a helical span at residues 573–593 (AYLAVMVFALVLGWMNALYFT). Residues 594–608 (RGLKLTGTYSIMIQK) lie on the Cytoplasmic side of the membrane. Residues 609–636 (ILFKDLFRFLLVYLLFMIGYASALVSLL) traverse the membrane as a helical segment. The Extracellular segment spans residues 637 to 665 (NPCANMKVCNEDQTNCTVPTYPSCRDSET). The pore-forming intramembrane region spans 666–685 (FSTFLLDLFKLTIGMGDLEM). A Selectivity filter motif is present at residues 679-682 (GMGD). Residue Asp-682 participates in Ca(2+) binding. Residues 686-693 (LSSTKYPV) are Extracellular-facing. A helical membrane pass occupies residues 694–722 (VFIILLVTYIILTFVLLLNMLIALMGETV). The Cytoplasmic portion of the chain corresponds to 723–871 (GQVSKESKHI…RKWRTDDAPL (149 aa)). Residue Tyr-805 is modified to Phosphotyrosine. The interaction with calmodulin and ITPR3 stretch occupies residues 812-831 (HTVGRLRRDRWSSVVPRVVE). Residue Ser-824 is modified to Phosphoserine. The segment at 849–871 (GNPRCDGHQQGYPRKWRTDDAPL) is disordered.

The protein belongs to the transient receptor (TC 1.A.4) family. TrpV subfamily. TRPV4 sub-subfamily. Homotetramer. Self-associates in an isoform-specific manner. Isoform 1 and isoform 5 can oligomerize, but isoform 2, isoform 4 and isoform 6 cannot oligomerize. Interacts with calmodulin. Interacts with Map7 and Src family Tyr protein kinases LYN, SRC, FYN, HCK, LCK and YES. Interacts with CTNNB1. The TRPV4 and CTNNB1 complex can interact with CDH1. Interacts with PACSIN1, PACSIN2 and PACSIN3 (via SH3 domain). Part of a complex containing MLC1, AQP4, HEPACAM and ATP1B1. Interacts with ITPR3. Interacts with AQP5; the interaction is probably indirect and regulates TRPV4 activation by hypotonicity. Interacts with ANO1. Interacts (via C-terminus) with PKD2 (via C-terminus). Interacts with DDX3X; this interaction is decreased when the channel is activated. N-glycosylated. Found in the synoviocytes from patients with (RA) and without (CTR) rheumatoid arthritis (at protein level).

Its subcellular location is the cell membrane. It is found in the apical cell membrane. It localises to the cell junction. The protein localises to the adherens junction. The protein resides in the cell projection. Its subcellular location is the cilium. It is found in the endoplasmic reticulum. The catalysed reaction is Ca(2+)(in) = Ca(2+)(out). Channel activation is inhibited by binding to phosphatidylinositol-4,5-bisphosphate, and to a much lesser degree by phosphatidylinositol-3,4,5-trisphosphate. Not inhibited by phosphatidylinositol-3,4-bisphosphate and phosphatidylinositol-3,5-bisphosphate. In terms of biological role, non-selective calcium permeant cation channel involved in osmotic sensitivity and mechanosensitivity. Activation by exposure to hypotonicity within the physiological range exhibits an outward rectification. Also activated by heat, low pH, citrate and phorbol esters. Increase of intracellular Ca(2+) potentiates currents. Channel activity seems to be regulated by a calmodulin-dependent mechanism with a negative feedback mechanism. Promotes cell-cell junction formation in skin keratinocytes and plays an important role in the formation and/or maintenance of functional intercellular barriers. Acts as a regulator of intracellular Ca(2+) in synoviocytes. Plays an obligatory role as a molecular component in the nonselective cation channel activation induced by 4-alpha-phorbol 12,13-didecanoate and hypotonic stimulation in synoviocytes and also regulates production of IL-8. Together with PKD2, forms mechano- and thermosensitive channels in cilium. Negatively regulates expression of PPARGC1A, UCP1, oxidative metabolism and respiration in adipocytes. Regulates expression of chemokines and cytokines related to pro-inflammatory pathway in adipocytes. Together with AQP5, controls regulatory volume decrease in salivary epithelial cells. Required for normal development and maintenance of bone and cartilage. In its inactive state, may sequester DDX3X at the plasma membrane. When activated, the interaction between both proteins is affected and DDX3X relocalizes to the nucleus. In neurons of the central nervous system, could play a role in triggering voluntary water intake in response to increased sodium concentration in body fluid. Functionally, non-selective calcium permeant cation channel involved in osmotic sensitivity and mechanosensitivity. Activation by exposure to hypotonicity within the physiological range exhibits an outward rectification. Also activated by phorbol esters. Has the same channel activity as isoform 1, and is activated by the same stimuli. Its function is as follows. Lacks channel activity, due to impaired oligomerization and intracellular retention. (Microbial infection) Facilitates hepatitis C virus (HCV) replication, possibly through its action on DDX3X. In terms of biological role, (Microbial infection) Facilitates Dengue virus (DENV) replication, possibly through its action on DDX3X. Functionally, (Microbial infection) Facilitates Zika virus (ZIKV) replication, possibly through its action on DDX3X. In Homo sapiens (Human), this protein is Transient receptor potential cation channel subfamily V member 4 (TRPV4).